Consider the following 249-residue polypeptide: tRNA pseudouridine synthase A (249 aa).

The active-site Nucleophile is the D53. Y111 provides a ligand contact to substrate.

Belongs to the tRNA pseudouridine synthase TruA family. Homodimer.

It catalyses the reaction uridine(38/39/40) in tRNA = pseudouridine(38/39/40) in tRNA. Functionally, formation of pseudouridine at positions 38, 39 and 40 in the anticodon stem and loop of transfer RNAs. This Streptococcus gordonii (strain Challis / ATCC 35105 / BCRC 15272 / CH1 / DL1 / V288) protein is tRNA pseudouridine synthase A.